Here is a 130-residue protein sequence, read N- to C-terminus: Large ribosomal subunit protein bL12 (130 aa).

The protein belongs to the bacterial ribosomal protein bL12 family. Homodimer. Part of the ribosomal stalk of the 50S ribosomal subunit. Forms a multimeric L10(L12)X complex, where L10 forms an elongated spine to which 2 to 4 L12 dimers bind in a sequential fashion. Binds GTP-bound translation factors.

Forms part of the ribosomal stalk which helps the ribosome interact with GTP-bound translation factors. Is thus essential for accurate translation. The polypeptide is Large ribosomal subunit protein bL12 (Thermobifida fusca (strain YX)).